The chain runs to 331 residues: Centriolar satellite-associated tubulin polyglutamylase complex regulator 1 (331 aa).

The tract at residues 1–111 (MLSPERLALP…HCLLQLLCPD (111 aa)) is required for interaction with PCM1. Positions 1 to 225 (MLSPERLALP…SCPPPALVKE (225 aa)) are required for interaction with TPGS1, LRRC49, and TTLL1. A required for interaction with TPGS2 region spans residues 112-331 (FPLELTQKAA…STEETDESET (220 aa)). The tract at residues 292-331 (SCLPSRTPPRVGSPWKPLHRSRKLDAESDGSTEETDESET) is disordered. The span at 318–331 (ESDGSTEETDESET) shows a compositional bias: acidic residues. A Phosphoserine modification is found at Ser319.

Belongs to the CSTPP1 family. In terms of assembly, interacts with PCM1. Interacts with TTLL1, TPGS1, TPGS2 and LRRC49; the interactions link CSTPP1 to the complex TPGC. Binds to alpha-tubulin.

Its subcellular location is the cytoplasm. It is found in the cytoskeleton. It localises to the microtubule organizing center. The protein localises to the centrosome. The protein resides in the centriolar satellite. In terms of biological role, regulator of the tubulin polyglutamylase complex (TPGC) that controls cytoskeletal organization, nuclear shape, and cilium disassembly by balancing microtubule and actin assembly. Regulates the assembly and stability of the TPGC and thereby modulates polyglutamylation of the microtubule, which antagonizes MAP4 binding. This chain is Centriolar satellite-associated tubulin polyglutamylase complex regulator 1 (Cstpp1), found in Rattus norvegicus (Rat).